The chain runs to 477 residues: 3-sulfolactaldehyde dehydrogenase (477 aa).

Glycine 232–serine 233 lines the NAD(+) pocket. The active-site Proton acceptor is glutamate 252. Residue leucine 253 coordinates NAD(+). Cysteine 286 (nucleophile) is an active-site residue. Glutamate 380 provides a ligand contact to NAD(+).

The protein belongs to the aldehyde dehydrogenase family.

The enzyme catalyses (2S)-3-sulfolactaldehyde + NAD(+) + H2O = (2S)-3-sulfolactate + NADH + 2 H(+). In terms of biological role, part of the sulfo-TAL (or sulfo-SFT) pathway, a D-sulfoquinovose degradation pathway that produces sulfolactate (SL). Catalyzes the oxidation of 3-sulfolactaldehyde (SLA) to sulfolactate (SL). The chain is 3-sulfolactaldehyde dehydrogenase from Priestia aryabhattai (Bacillus aryabhattai).